Reading from the N-terminus, the 326-residue chain is N-acetyl-gamma-glutamyl-phosphate reductase (326 aa).

Residue Cys-155 is part of the active site.

It belongs to the NAGSA dehydrogenase family. Type 1 subfamily.

The protein resides in the cytoplasm. It carries out the reaction N-acetyl-L-glutamate 5-semialdehyde + phosphate + NADP(+) = N-acetyl-L-glutamyl 5-phosphate + NADPH + H(+). The protein operates within amino-acid biosynthesis; L-arginine biosynthesis; N(2)-acetyl-L-ornithine from L-glutamate: step 3/4. Its function is as follows. Catalyzes the NADPH-dependent reduction of N-acetyl-5-glutamyl phosphate to yield N-acetyl-L-glutamate 5-semialdehyde. This Shewanella baltica (strain OS155 / ATCC BAA-1091) protein is N-acetyl-gamma-glutamyl-phosphate reductase.